We begin with the raw amino-acid sequence, 227 residues long: Translation initiation factor 6 (227 aa).

This sequence belongs to the eIF-6 family.

Functionally, binds to the 50S ribosomal subunit and prevents its association with the 30S ribosomal subunit to form the 70S initiation complex. The chain is Translation initiation factor 6 from Pyrococcus furiosus (strain ATCC 43587 / DSM 3638 / JCM 8422 / Vc1).